Here is a 254-residue protein sequence, read N- to C-terminus: Pimeloyl-[acyl-carrier protein] methyl ester esterase (254 aa).

In terms of domain architecture, AB hydrolase-1 spans 14-242 (LVLLHGWGMN…ASHAPFISHP (229 aa)). Substrate is bound by residues Trp-20, 82–83 (SL), and 143–147 (FLAIQ). Ser-82 functions as the Nucleophile in the catalytic mechanism. Active-site residues include Asp-207 and His-235. Residue His-235 coordinates substrate.

Belongs to the AB hydrolase superfamily. Carboxylesterase BioH family. As to quaternary structure, monomer.

The protein localises to the cytoplasm. The enzyme catalyses 6-carboxyhexanoyl-[ACP] methyl ester + H2O = 6-carboxyhexanoyl-[ACP] + methanol + H(+). It participates in cofactor biosynthesis; biotin biosynthesis. Its function is as follows. The physiological role of BioH is to remove the methyl group introduced by BioC when the pimeloyl moiety is complete. It allows to synthesize pimeloyl-ACP via the fatty acid synthetic pathway through the hydrolysis of the ester bonds of pimeloyl-ACP esters. This is Pimeloyl-[acyl-carrier protein] methyl ester esterase from Aeromonas hydrophila subsp. hydrophila (strain ATCC 7966 / DSM 30187 / BCRC 13018 / CCUG 14551 / JCM 1027 / KCTC 2358 / NCIMB 9240 / NCTC 8049).